The primary structure comprises 425 residues: Glucan endo-1,3-beta-glucosidase 10 (425 aa).

An N-terminal signal peptide occupies residues methionine 1–serine 26. Glutamate 119 serves as the catalytic Proton donor. The N-linked (GlcNAc...) asparagine glycan is linked to asparagine 124. Glutamate 266 serves as the catalytic Nucleophile. A disordered region spans residues glycine 347 to proline 387. Over residues threonine 350 to glycine 366 the composition is skewed to low complexity. Asparagine 362 is a glycosylation site (N-linked (GlcNAc...) asparagine). A compositionally biased stretch (gly residues) spans serine 367–isoleucine 384. Serine 401 carries the GPI-anchor amidated serine lipid modification. Positions alanine 402 to leucine 425 are cleaved as a propeptide — removed in mature form.

The protein belongs to the glycosyl hydrolase 17 family. As to expression, highly expressed in flowers and siliques.

It is found in the cell membrane. The protein resides in the cell junction. The protein localises to the plasmodesma. The enzyme catalyses Hydrolysis of (1-&gt;3)-beta-D-glucosidic linkages in (1-&gt;3)-beta-D-glucans.. Plasmodesmal-associated membrane beta-1,3-glucanase involved in plasmodesmal callose degradation and functions in the gating of plasmodesmata. This is Glucan endo-1,3-beta-glucosidase 10 from Arabidopsis thaliana (Mouse-ear cress).